The sequence spans 286 residues: Putative chaperone BssE (286 aa).

Residues G47–S54 and G108–E115 each bind ATP.

The protein belongs to the CbbQ/NirQ/NorQ/GpvN family.

May have a role in assembly and/or activation of benzylsuccinate synthase. In Thauera aromatica, this protein is Putative chaperone BssE (bssE).